The chain runs to 475 residues: Ribulose bisphosphate carboxylase large chain (475 aa).

Positions 1 to 2 (MS) are excised as a propeptide. P3 bears the N-acetylproline mark. Residue K14 is modified to N6,N6,N6-trimethyllysine. 2 residues coordinate substrate: N123 and T173. Catalysis depends on K175, which acts as the Proton acceptor. A substrate-binding site is contributed by K177. K201, D203, and E204 together coordinate Mg(2+). Position 201 is an N6-carboxylysine (K201). The active-site Proton acceptor is H294. Substrate-binding residues include R295, H327, and S379.

It belongs to the RuBisCO large chain family. Type I subfamily. As to quaternary structure, heterohexadecamer of 8 large chains and 8 small chains; disulfide-linked. The disulfide link is formed within the large subunit homodimers. The cofactor is Mg(2+). The disulfide bond which can form in the large chain dimeric partners within the hexadecamer appears to be associated with oxidative stress and protein turnover.

The protein resides in the plastid. The protein localises to the chloroplast. The catalysed reaction is 2 (2R)-3-phosphoglycerate + 2 H(+) = D-ribulose 1,5-bisphosphate + CO2 + H2O. It catalyses the reaction D-ribulose 1,5-bisphosphate + O2 = 2-phosphoglycolate + (2R)-3-phosphoglycerate + 2 H(+). In terms of biological role, ruBisCO catalyzes two reactions: the carboxylation of D-ribulose 1,5-bisphosphate, the primary event in carbon dioxide fixation, as well as the oxidative fragmentation of the pentose substrate in the photorespiration process. Both reactions occur simultaneously and in competition at the same active site. This chain is Ribulose bisphosphate carboxylase large chain, found in Pseudolarix amabilis (Golden larch).